Consider the following 145-residue polypeptide: Ribonuclease H (145 aa).

The 141-residue stretch at 1 to 141 (MQEVELFTDG…VDELANQAMD (141 aa)) folds into the RNase H type-1 domain. Mg(2+)-binding residues include aspartate 9, glutamate 47, aspartate 69, and aspartate 133.

The protein belongs to the RNase H family. In terms of assembly, monomer. Mg(2+) is required as a cofactor.

It is found in the cytoplasm. The catalysed reaction is Endonucleolytic cleavage to 5'-phosphomonoester.. In terms of biological role, endonuclease that specifically degrades the RNA of RNA-DNA hybrids. This chain is Ribonuclease H, found in Hydrogenovibrio crunogenus (strain DSM 25203 / XCL-2) (Thiomicrospira crunogena).